The following is a 370-amino-acid chain: Protein SHI RELATED SEQUENCE 1 (370 aa).

A disordered region spans residues 1-37 (MAGFFSLDGGGGGGGGGGNNQEDHRSNTNPPPPVSEA). The span at 8 to 19 (DGGGGGGGGGGN) shows a compositional bias: gly residues. Zn(2+) contacts are provided by cysteine 144, cysteine 147, cysteine 155, cysteine 160, cysteine 164, and cysteine 171. A DNA-binding region (zn(2)-C6 fungal-type; degenerate) is located at residues 144-171 (CQDCGNQAKKDCSHMRCRTCCKSRGFEC). Positions 271 to 274 (IGGH) match the Required for homo- and heterodimerization motif.

It belongs to the SHI protein family. In terms of assembly, forms homodimers and heterodimers with LRP1. In terms of tissue distribution, expressed in flowers, seeds and seedlings.

It localises to the nucleus. Transcription activator that binds DNA on 5'-ACTCTAC-3' and promotes auxin homeostasis-regulating gene expression (e.g. YUC genes), as well as genes affecting stamen development, cell expansion and timing of flowering. Synergistically with other SHI-related proteins, regulates gynoecium, stamen and leaf development in a dose-dependent manner, controlling apical-basal patterning. Promotes style and stigma formation, and influences vascular development during gynoecium development. May also have a role in the formation and/or maintenance of the shoot apical meristem (SAM). The chain is Protein SHI RELATED SEQUENCE 1 (SRS1) from Arabidopsis thaliana (Mouse-ear cress).